The chain runs to 159 residues: S-ribosylhomocysteine lyase (159 aa).

Fe cation is bound by residues H53, H57, and C124.

It belongs to the LuxS family. Homodimer. Fe cation serves as cofactor.

The catalysed reaction is S-(5-deoxy-D-ribos-5-yl)-L-homocysteine = (S)-4,5-dihydroxypentane-2,3-dione + L-homocysteine. Functionally, involved in the synthesis of autoinducer 2 (AI-2) which is secreted by bacteria and is used to communicate both the cell density and the metabolic potential of the environment. The regulation of gene expression in response to changes in cell density is called quorum sensing. Catalyzes the transformation of S-ribosylhomocysteine (RHC) to homocysteine (HC) and 4,5-dihydroxy-2,3-pentadione (DPD). In Porphyromonas gingivalis (strain ATCC BAA-308 / W83), this protein is S-ribosylhomocysteine lyase.